The sequence spans 132 residues: Small ribosomal subunit protein uS8 (132 aa).

It belongs to the universal ribosomal protein uS8 family. Part of the 30S ribosomal subunit. Contacts proteins S5 and S12.

In terms of biological role, one of the primary rRNA binding proteins, it binds directly to 16S rRNA central domain where it helps coordinate assembly of the platform of the 30S subunit. The sequence is that of Small ribosomal subunit protein uS8 from Mycobacterium bovis (strain ATCC BAA-935 / AF2122/97).